The following is a 192-amino-acid chain: Glycerol-3-phosphate acyltransferase (192 aa).

5 helical membrane-spanning segments follow: residues 1–21 (MTSA…GVLL), 51–71 (LGAV…VLAV), 78–98 (PTVH…PVWL), 112–132 (VLLV…VAVF), and 155–175 (LTAR…LMLW).

Belongs to the PlsY family. As to quaternary structure, probably interacts with PlsX.

The protein resides in the cell inner membrane. It carries out the reaction an acyl phosphate + sn-glycerol 3-phosphate = a 1-acyl-sn-glycero-3-phosphate + phosphate. Its pathway is lipid metabolism; phospholipid metabolism. Catalyzes the transfer of an acyl group from acyl-phosphate (acyl-PO(4)) to glycerol-3-phosphate (G3P) to form lysophosphatidic acid (LPA). This enzyme utilizes acyl-phosphate as fatty acyl donor, but not acyl-CoA or acyl-ACP. This chain is Glycerol-3-phosphate acyltransferase, found in Myxococcus xanthus (strain DK1622).